Here is a 713-residue protein sequence, read N- to C-terminus: Probable muscarinic acetylcholine receptor gar-1 (713 aa).

Over 1-20 (MPNYTVPPDPADTSWDSPYS) the chain is Extracellular. Residue Asn3 is glycosylated (N-linked (GlcNAc...) asparagine). A helical transmembrane segment spans residues 21-41 (IPVQIVVWIIIIVLSLETIIG). At 42 to 66 (NAMVVMAYRIERNISKQVSNRYIVS) the chain is on the cytoplasmic side. A helical transmembrane segment spans residues 67 to 87 (LAISDLIIGIEGFPFFTVYVL). Over 88–101 (NGDRWPLGWVACQT) the chain is Extracellular. Cysteines 99 and 180 form a disulfide. A helical transmembrane segment spans residues 102-122 (WLFLDYTLCLVSILTVLLITA). The Cytoplasmic segment spans residues 123–144 (DRYLSVCHTAKYLKWQSPTKTQ). Residues 145 to 165 (LLIVMSWLLPAIIFGIMIYGW) traverse the membrane as a helical segment. Residues 166 to 189 (QAMTGQSTSMSGAECSAPFLSNPY) are Extracellular-facing. Residues 190 to 210 (VNMGMYVAYYWTTLVAMLILY) traverse the membrane as a helical segment. Topologically, residues 211–633 (KGIHQAAKNL…QTKAEKRAHK (423 aa)) are cytoplasmic. 4 disordered regions span residues 256–350 (KEKA…SRRC), 381–403 (SRYS…VEKA), 427–475 (KNTD…KQAE), and 515–585 (LIRR…TDTF). 2 stretches are compositionally biased toward polar residues: residues 266–275 (SGYTSNQAGD) and 287–315 (PETS…NDQN). Basic and acidic residues-rich tracts occupy residues 320–333 (EEER…RESN) and 393–403 (HENDEKEVEKA). Over residues 429-439 (TDSNNDSDTTS) the composition is skewed to low complexity. Over residues 444–457 (RSRKYKKNKRPRSS) the composition is skewed to basic residues. Over residues 557 to 571 (LTVNNENRGETSSQP) the composition is skewed to polar residues. A helical membrane pass occupies residues 634–656 (AFRTITFIVGFFAILWSPYYIMA). Residues 657 to 670 (TVYGFCKGECIPSF) are Extracellular-facing. The chain crosses the membrane as a helical span at residues 671-693 (LYTLSYYMCYLNSSGNPFAYALA). At 694–713 (NRQFRSAFMRMFRGNFNKVA) the chain is on the cytoplasmic side.

It belongs to the G-protein coupled receptor 1 family. Muscarinic acetylcholine receptor subfamily. Expressed in head region of the larva. In adults, expression is seen in the periventricularis magnocellularis (PVM) neuron.

The protein resides in the cell membrane. Functionally, the muscarinic acetylcholine receptor mediates various cellular responses, including inhibition of adenylate cyclase, breakdown of phosphoinositides and modulation of potassium channels through the action of G proteins. Primary transducing effect is Pi turnover. This is Probable muscarinic acetylcholine receptor gar-1 (gar-1) from Caenorhabditis elegans.